The following is a 1375-amino-acid chain: DNA-directed RNA polymerase subunit beta' (1375 aa).

Residues Cys-70, Cys-72, Cys-85, and Cys-88 each contribute to the Zn(2+) site. The Mg(2+) site is built by Asp-460, Asp-462, and Asp-464. Residues Cys-800, Cys-874, Cys-881, and Cys-884 each coordinate Zn(2+).

It belongs to the RNA polymerase beta' chain family. In terms of assembly, the RNAP catalytic core consists of 2 alpha, 1 beta, 1 beta' and 1 omega subunit. When a sigma factor is associated with the core the holoenzyme is formed, which can initiate transcription. The cofactor is Mg(2+). Requires Zn(2+) as cofactor.

The enzyme catalyses RNA(n) + a ribonucleoside 5'-triphosphate = RNA(n+1) + diphosphate. Its function is as follows. DNA-dependent RNA polymerase catalyzes the transcription of DNA into RNA using the four ribonucleoside triphosphates as substrates. In Bdellovibrio bacteriovorus (strain ATCC 15356 / DSM 50701 / NCIMB 9529 / HD100), this protein is DNA-directed RNA polymerase subunit beta'.